The following is a 605-amino-acid chain: Elongation factor 4 (605 aa).

A tr-type G domain is found at 9-192 (SRIRNFCIIA…AIIARVPAPA (184 aa)). GTP-binding positions include 21–26 (DHGKST) and 139–142 (NKID).

Belongs to the TRAFAC class translation factor GTPase superfamily. Classic translation factor GTPase family. LepA subfamily.

The protein localises to the cell inner membrane. It carries out the reaction GTP + H2O = GDP + phosphate + H(+). Functionally, required for accurate and efficient protein synthesis under certain stress conditions. May act as a fidelity factor of the translation reaction, by catalyzing a one-codon backward translocation of tRNAs on improperly translocated ribosomes. Back-translocation proceeds from a post-translocation (POST) complex to a pre-translocation (PRE) complex, thus giving elongation factor G a second chance to translocate the tRNAs correctly. Binds to ribosomes in a GTP-dependent manner. The sequence is that of Elongation factor 4 from Chlorobium luteolum (strain DSM 273 / BCRC 81028 / 2530) (Pelodictyon luteolum).